Here is a 202-residue protein sequence, read N- to C-terminus: 7-methyl-GTP pyrophosphatase (202 aa).

D70 functions as the Proton acceptor in the catalytic mechanism.

The protein belongs to the Maf family. YceF subfamily. The cofactor is a divalent metal cation.

The protein resides in the cytoplasm. It carries out the reaction N(7)-methyl-GTP + H2O = N(7)-methyl-GMP + diphosphate + H(+). Nucleoside triphosphate pyrophosphatase that hydrolyzes 7-methyl-GTP (m(7)GTP). May have a dual role in cell division arrest and in preventing the incorporation of modified nucleotides into cellular nucleic acids. In Pseudoalteromonas translucida (strain TAC 125), this protein is 7-methyl-GTP pyrophosphatase.